The primary structure comprises 339 residues: Phenylalanine--tRNA ligase alpha subunit (339 aa).

Glutamate 254 is a binding site for Mg(2+).

It belongs to the class-II aminoacyl-tRNA synthetase family. Phe-tRNA synthetase alpha subunit type 1 subfamily. Tetramer of two alpha and two beta subunits. It depends on Mg(2+) as a cofactor.

The protein localises to the cytoplasm. The catalysed reaction is tRNA(Phe) + L-phenylalanine + ATP = L-phenylalanyl-tRNA(Phe) + AMP + diphosphate + H(+). The polypeptide is Phenylalanine--tRNA ligase alpha subunit (Acetivibrio thermocellus (strain ATCC 27405 / DSM 1237 / JCM 9322 / NBRC 103400 / NCIMB 10682 / NRRL B-4536 / VPI 7372) (Clostridium thermocellum)).